The following is a 21-amino-acid chain: Venom peptide Tv1 (21 aa).

3 cysteine pairs are disulfide-bonded: Cys-4–Cys-20, Cys-5–Cys-21, and Cys-7–Cys-16.

In terms of tissue distribution, expressed by the salivary gland. This peptide is considered as a venom peptide.

It is found in the secreted. In terms of biological role, injections of 20 uM of this synthetic peptide (Ile) causes partial paralysis to polychaete worms (Nereis virens), the natural prey of terebrid snails. This paralysis may be due to an inhibition of nicotinic receptors at the neuromuscular junction. This Terebra variegata (Variegate auger snail) protein is Venom peptide Tv1.